The chain runs to 929 residues: Isoleucine--tRNA ligase (929 aa).

Residues 58-68 (PYANGDIHIGH) carry the 'HIGH' region motif. E563 serves as a coordination point for L-isoleucyl-5'-AMP. Residues 605–609 (KMSKS) carry the 'KMSKS' region motif. K608 provides a ligand contact to ATP. C892, C895, C912, and C915 together coordinate Zn(2+).

Belongs to the class-I aminoacyl-tRNA synthetase family. IleS type 1 subfamily. In terms of assembly, monomer. The cofactor is Zn(2+).

It localises to the cytoplasm. The enzyme catalyses tRNA(Ile) + L-isoleucine + ATP = L-isoleucyl-tRNA(Ile) + AMP + diphosphate. Functionally, catalyzes the attachment of isoleucine to tRNA(Ile). As IleRS can inadvertently accommodate and process structurally similar amino acids such as valine, to avoid such errors it has two additional distinct tRNA(Ile)-dependent editing activities. One activity is designated as 'pretransfer' editing and involves the hydrolysis of activated Val-AMP. The other activity is designated 'posttransfer' editing and involves deacylation of mischarged Val-tRNA(Ile). The sequence is that of Isoleucine--tRNA ligase from Neisseria meningitidis serogroup C / serotype 2a (strain ATCC 700532 / DSM 15464 / FAM18).